The chain runs to 936 residues: Protein NLP2 (936 aa).

A disordered region spans residues 99 to 130 (IMSVNPTEAEKTGKSSGELGSDDGAHQGSSMV). The RWP-RK domain occupies 550-635 (QPSSIGHAEK…INSVHGVDRS (86 aa)). 3 disordered regions span residues 666–697 (PSVG…SCQL), 753–782 (CTNP…IQQE), and 794–827 (DKDH…RSAL). Residues 671–682 (TVEENSDLKSEE) are compositionally biased toward basic and acidic residues. A compositionally biased stretch (polar residues) spans 688–697 (DGSQRQSCQL). Over residues 754–769 (TNPSSSLRPSSESTRN) the composition is skewed to low complexity. Positions 770 to 781 (QIVGRNSPSIQQ) are enriched in polar residues. Over residues 801–815 (STSGMTDSSSGSASS) the composition is skewed to low complexity. Residues 816–825 (HPTFKQNTRS) are compositionally biased toward polar residues. A PB1 domain is found at 834-916 (ALTVKATYNG…RIVKLQVRDL (83 aa)).

Its subcellular location is the nucleus. Its function is as follows. Probable transcription factor. This chain is Protein NLP2, found in Oryza sativa subsp. japonica (Rice).